We begin with the raw amino-acid sequence, 461 residues long: Putative transcription initiation factor IIB-like protein (461 aa).

Positions 113 to 142 (SESLENIQSENSENNDNFTDNNTKKSPTKS) are disordered. Positions 121-137 (SENSENNDNFTDNNTKK) are enriched in low complexity. A TFIIB-type zinc finger spans residues 141–173 (KSRICSGCGSKGTLLEDQSSSVLVCSECGMIND). Residues C145, C165, and C168 each contribute to the Zn(2+) site. 2 consecutive repeat copies span residues 246 to 327 (ISTI…EKKV) and 360 to 430 (IRRH…DVTI).

It belongs to the TFIIB family.

The chain is Putative transcription initiation factor IIB-like protein from Acanthamoeba polyphaga mimivirus (APMV).